The sequence spans 258 residues: Phosphate import ATP-binding protein PstB (258 aa).

The region spanning 5 to 247 (IDVSGLNAYY…ERIFSNPSVQ (243 aa)) is the ABC transporter domain. Residue 37–44 (GPSGCGKS) participates in ATP binding.

The protein belongs to the ABC transporter superfamily. Phosphate importer (TC 3.A.1.7) family. The complex is composed of two ATP-binding proteins (PstB), two transmembrane proteins (PstC and PstA) and a solute-binding protein (PstS).

The protein localises to the cell membrane. It catalyses the reaction phosphate(out) + ATP + H2O = ADP + 2 phosphate(in) + H(+). In terms of biological role, part of the ABC transporter complex PstSACB involved in phosphate import. Responsible for energy coupling to the transport system. The sequence is that of Phosphate import ATP-binding protein PstB from Streptomyces coelicolor (strain ATCC BAA-471 / A3(2) / M145).